Here is a 157-residue protein sequence, read N- to C-terminus: Baculoviral IAP repeat-containing protein 5.2-A (157 aa).

A BIR repeat occupies 31-101 (RLRTFSNWPF…KHSPSCLFIA (71 aa)). Position 47 is a phosphothreonine; by CDK1 (T47). C70, C73, H90, and C97 together coordinate Zn(2+).

The protein belongs to the IAP family. As to quaternary structure, component of the CPC at least composed of survivin/birc5, incenp, cdca8/borealin and/or cdca9/dasra-A, and aurkb/aurora-B. Interacts directly with incenp (via N-terminus). Interacts with rxra; the interaction is stronger in the absence of 9-cis retinoic acids. In terms of processing, ubiquitination is required for centrosome-targeting. Highly expressed in vascular endothelial cells of tadpoles.

The protein resides in the cytoplasm. It localises to the nucleus. Its subcellular location is the chromosome. It is found in the centromere. The protein localises to the cytoskeleton. The protein resides in the spindle. Component of the chromosomal passenger complex (CPC), a complex that acts as a key regulator of mitosis. The CPC complex has essential functions at the centromere in ensuring correct chromosome alignment and segregation and is required for chromatin-induced microtubule stabilization and spindle assembly. Does not appear to exhibit anti-apoptotic activity. Plays a role in increasing blood vessel size during development. The polypeptide is Baculoviral IAP repeat-containing protein 5.2-A (birc5.2-a) (Xenopus laevis (African clawed frog)).